Here is a 404-residue protein sequence, read N- to C-terminus: Ammonium transporter (404 aa).

Transmembrane regions (helical) follow at residues 7-27 (VFMF…ALFY), 44-64 (FSSI…LAFA), 96-116 (LFMM…SGAF), 125-145 (FLLF…HWVW), 158-178 (FAGG…LAIV), 227-247 (INTN…EWII), 254-274 (LGAV…AGFV), 277-297 (FASI…VFSL), and 352-372 (IVAI…IIKI).

The protein belongs to the ammonia transporter channel (TC 1.A.11.2) family. As to quaternary structure, interacts with NrgB for a correct localization of the latter. GlnK-AmtB complex interacts with TnrA.

Its subcellular location is the cell membrane. Functions as an ammonium and methylammonium transporter in the absence of glutamine. Required for ammonium utilization at low concentrations or at low pH values, when ammonium is the single nitrogen source. Required for binding of NrgB to the membrane. Interaction between GlnK-AmtB complex and TnrA protects TnrA from proteolytic degradation. The sequence is that of Ammonium transporter from Bacillus subtilis (strain 168).